Consider the following 228-residue polypeptide: tRNA (guanine-N(1)-)-methyltransferase (228 aa).

S-adenosyl-L-methionine is bound by residues Gly-111 and 135–140 (LGDYVL).

This sequence belongs to the RNA methyltransferase TrmD family. Homodimer.

It is found in the cytoplasm. It carries out the reaction guanosine(37) in tRNA + S-adenosyl-L-methionine = N(1)-methylguanosine(37) in tRNA + S-adenosyl-L-homocysteine + H(+). Its function is as follows. Specifically methylates guanosine-37 in various tRNAs. The sequence is that of tRNA (guanine-N(1)-)-methyltransferase from Clavibacter sepedonicus (Clavibacter michiganensis subsp. sepedonicus).